Reading from the N-terminus, the 266-residue chain is Glucosamine-6-phosphate deaminase (266 aa).

The active-site Proton acceptor; for enolization step is the aspartate 67. The active-site For ring-opening step is asparagine 139. Histidine 141 (proton acceptor; for ring-opening step) is an active-site residue. Glutamate 146 functions as the For ring-opening step in the catalytic mechanism.

It belongs to the glucosamine/galactosamine-6-phosphate isomerase family. NagB subfamily. Homohexamer.

It catalyses the reaction alpha-D-glucosamine 6-phosphate + H2O = beta-D-fructose 6-phosphate + NH4(+). It participates in amino-sugar metabolism; N-acetylneuraminate degradation; D-fructose 6-phosphate from N-acetylneuraminate: step 5/5. In terms of biological role, catalyzes the reversible isomerization-deamination of glucosamine 6-phosphate (GlcN6P) to form fructose 6-phosphate (Fru6P) and ammonium ion. The chain is Glucosamine-6-phosphate deaminase from Marinomonas sp. (strain MWYL1).